Consider the following 147-residue polypeptide: SPI-1 type 3 secretion system pilotin (147 aa).

Positions 1–15 are cleaved as a signal peptide; it reads MKKFYSCLPVFLLIG. Cys16 carries the N-palmitoyl cysteine lipid modification. Cys16 carries S-diacylglycerol cysteine lipidation.

It belongs to the InvH family.

It localises to the cell outer membrane. Functionally, involved in the synthesis of the type III secretion system (T3SS), also called injectisome, which is used to inject bacterial effector proteins into eukaryotic host cells. Pilot protein that is required for the proper localization of the secretin InvG/SctC in the outer membrane. Necessary for efficient adherence and entry of these organisms into cultured epithelial cells. This is SPI-1 type 3 secretion system pilotin from Salmonella choleraesuis (strain SC-B67).